We begin with the raw amino-acid sequence, 406 residues long: Arginine deiminase (406 aa).

Cysteine 396 (amidino-cysteine intermediate) is an active-site residue.

Belongs to the arginine deiminase family.

Its subcellular location is the cytoplasm. The catalysed reaction is L-arginine + H2O = L-citrulline + NH4(+). The protein operates within amino-acid degradation; L-arginine degradation via ADI pathway; carbamoyl phosphate from L-arginine: step 1/2. The sequence is that of Arginine deiminase from Aliivibrio fischeri (strain MJ11) (Vibrio fischeri).